The sequence spans 762 residues: Poly(A) RNA polymerase CID14 (762 aa).

Positions 1-123 (MPTGFQPAES…KKEEQKAAER (123 aa)) are disordered. Basic residues predominate over residues 50–62 (KKNKKDKKKKGSK). Basic and acidic residues-rich tracts occupy residues 65–75 (QPVDEPDKKDG) and 99–123 (RKRD…AAER). Ser-189 is a binding site for ATP. 2 residues coordinate Mg(2+): Asp-200 and Asp-202. Gly-266, Lys-291, Ser-309, and Tyr-310 together coordinate ATP. Residues 336 to 393 (NLGTLLIEFFELFGRNFNYNDVGISIRRGGFYFSKASRGWMKGQSFLLSIEDPQDKDN) form the PAP-associated domain. Residues 482–762 (SIPLGADPKP…LGQSSGDMSD (281 aa)) form a disordered region. The span at 536–549 (VEDDELESDDDSDS) shows a compositional bias: acidic residues. A compositionally biased stretch (polar residues) spans 572 to 581 (RTANSRSTSR). Lys-610 serves as a coordination point for ATP. Composition is skewed to acidic residues over residues 677–687 (GEEEEEIDSDE) and 697–707 (SDGDLGSEDEI). A compositionally biased stretch (polar residues) spans 753 to 762 (LGQSSGDMSD).

The protein belongs to the DNA polymerase type-B-like family. As to quaternary structure, component of the TRAMP complex. The cofactor is Mg(2+). Mn(2+) is required as a cofactor.

Its subcellular location is the nucleus. The protein localises to the nucleolus. The enzyme catalyses RNA(n) + ATP = RNA(n)-3'-adenine ribonucleotide + diphosphate. Functionally, required for 3' polyadenylation of the 5.8S and 25S rRNAs as a prelude to their degradation in the exosome. Involved in the nucleolar organization to ensure faithful chromosome segregation during mitosis. In Cryptococcus neoformans var. neoformans serotype D (strain JEC21 / ATCC MYA-565) (Filobasidiella neoformans), this protein is Poly(A) RNA polymerase CID14.